A 179-amino-acid polypeptide reads, in one-letter code: Large ribosomal subunit protein uL5 (179 aa).

Belongs to the universal ribosomal protein uL5 family. As to quaternary structure, part of the 50S ribosomal subunit; part of the 5S rRNA/L5/L18/L25 subcomplex. Contacts the 5S rRNA and the P site tRNA. Forms a bridge to the 30S subunit in the 70S ribosome.

Functionally, this is one of the proteins that bind and probably mediate the attachment of the 5S RNA into the large ribosomal subunit, where it forms part of the central protuberance. In the 70S ribosome it contacts protein S13 of the 30S subunit (bridge B1b), connecting the 2 subunits; this bridge is implicated in subunit movement. Contacts the P site tRNA; the 5S rRNA and some of its associated proteins might help stabilize positioning of ribosome-bound tRNAs. The protein is Large ribosomal subunit protein uL5 of Desulforapulum autotrophicum (strain ATCC 43914 / DSM 3382 / VKM B-1955 / HRM2) (Desulfobacterium autotrophicum).